The primary structure comprises 332 residues: Formamidase (332 aa).

The region spanning 14 to 259 is the CN hydrolase domain; that stretch reads FLTALIQYPV…WEIVTAEVYP (246 aa). Glutamate 60 functions as the Proton acceptor in the catalytic mechanism. Catalysis depends on lysine 132, which acts as the Proton donor. Catalysis depends on cysteine 165, which acts as the Nucleophile.

This sequence belongs to the carbon-nitrogen hydrolase superfamily. Aliphatic amidase family.

It carries out the reaction formamide + H2O = formate + NH4(+). In terms of biological role, is an aliphatic amidase with a restricted substrate specificity, as it only hydrolyzes formamide. This Bacillus cereus (strain G9842) protein is Formamidase.